Here is a 427-residue protein sequence, read N- to C-terminus: Glutamate-1-semialdehyde 2,1-aminomutase (427 aa).

Lys-265 is modified (N6-(pyridoxal phosphate)lysine).

Belongs to the class-III pyridoxal-phosphate-dependent aminotransferase family. HemL subfamily. As to quaternary structure, homodimer. Pyridoxal 5'-phosphate serves as cofactor.

Its subcellular location is the cytoplasm. It catalyses the reaction (S)-4-amino-5-oxopentanoate = 5-aminolevulinate. It functions in the pathway porphyrin-containing compound metabolism; protoporphyrin-IX biosynthesis; 5-aminolevulinate from L-glutamyl-tRNA(Glu): step 2/2. The polypeptide is Glutamate-1-semialdehyde 2,1-aminomutase (Burkholderia pseudomallei (strain 1710b)).